Reading from the N-terminus, the 495-residue chain is GTPase Der (495 aa).

2 consecutive EngA-type G domains span residues 3–166 (PVVA…VQDE) and 208–381 (IKLA…ACAT). Residues 9–16 (GRPNVGKS), 56–60 (DTGGI), 118–121 (NKTD), 214–221 (GRPNVGKS), 261–265 (DTAGV), and 326–329 (NKWD) each bind GTP. One can recognise a KH-like domain in the interval 382 to 466 (RRVSTAMLTR…PIRIQFKEGE (85 aa)).

The protein belongs to the TRAFAC class TrmE-Era-EngA-EngB-Septin-like GTPase superfamily. EngA (Der) GTPase family. In terms of assembly, associates with the 50S ribosomal subunit.

Functionally, GTPase that plays an essential role in the late steps of ribosome biogenesis. This Pectobacterium carotovorum subsp. carotovorum (strain PC1) protein is GTPase Der.